The following is a 75-amino-acid chain: Large ribosomal subunit protein bL31 (75 aa).

Belongs to the bacterial ribosomal protein bL31 family. Type A subfamily. In terms of assembly, part of the 50S ribosomal subunit.

Binds the 23S rRNA. The sequence is that of Large ribosomal subunit protein bL31 from Rhodopseudomonas palustris (strain BisB18).